The primary structure comprises 458 residues: Bifunctional protein GlmU (458 aa).

The segment at 1–229 is pyrophosphorylase; it reads MNKFAIVLAA…FDESLGVNDR (229 aa). Residues 8–11, K22, Q72, and 77–78 each bind UDP-N-acetyl-alpha-D-glucosamine; these read LAAG and GT. D102 contributes to the Mg(2+) binding site. Residues G139, E154, N169, and N227 each coordinate UDP-N-acetyl-alpha-D-glucosamine. N227 lines the Mg(2+) pocket. Residues 230 to 250 are linker; that stretch reads VALSQAEGTMRKRINHEHMVN. The N-acetyltransferase stretch occupies residues 251–458; that stretch reads GVTLIDPATT…AKKMPHYRGQ (208 aa). R332 and K350 together coordinate UDP-N-acetyl-alpha-D-glucosamine. The active-site Proton acceptor is H362. 2 residues coordinate UDP-N-acetyl-alpha-D-glucosamine: Y365 and N376. Residues A379, S404, A422, and R439 each contribute to the acetyl-CoA site.

The protein in the N-terminal section; belongs to the N-acetylglucosamine-1-phosphate uridyltransferase family. This sequence in the C-terminal section; belongs to the transferase hexapeptide repeat family. As to quaternary structure, homotrimer. The cofactor is Mg(2+).

The protein resides in the cytoplasm. It carries out the reaction alpha-D-glucosamine 1-phosphate + acetyl-CoA = N-acetyl-alpha-D-glucosamine 1-phosphate + CoA + H(+). The catalysed reaction is N-acetyl-alpha-D-glucosamine 1-phosphate + UTP + H(+) = UDP-N-acetyl-alpha-D-glucosamine + diphosphate. The protein operates within nucleotide-sugar biosynthesis; UDP-N-acetyl-alpha-D-glucosamine biosynthesis; N-acetyl-alpha-D-glucosamine 1-phosphate from alpha-D-glucosamine 6-phosphate (route II): step 2/2. Its pathway is nucleotide-sugar biosynthesis; UDP-N-acetyl-alpha-D-glucosamine biosynthesis; UDP-N-acetyl-alpha-D-glucosamine from N-acetyl-alpha-D-glucosamine 1-phosphate: step 1/1. It functions in the pathway bacterial outer membrane biogenesis; LPS lipid A biosynthesis. In terms of biological role, catalyzes the last two sequential reactions in the de novo biosynthetic pathway for UDP-N-acetylglucosamine (UDP-GlcNAc). The C-terminal domain catalyzes the transfer of acetyl group from acetyl coenzyme A to glucosamine-1-phosphate (GlcN-1-P) to produce N-acetylglucosamine-1-phosphate (GlcNAc-1-P), which is converted into UDP-GlcNAc by the transfer of uridine 5-monophosphate (from uridine 5-triphosphate), a reaction catalyzed by the N-terminal domain. This Lactococcus lactis subsp. cremoris (strain SK11) protein is Bifunctional protein GlmU.